The primary structure comprises 720 residues: Iron-sulfur clusters transporter ATM1, mitochondrial (720 aa).

The N-terminal 36 residues, 1–36, are a transit peptide targeting the mitochondrion; it reads MIMFRSLSVTPVWKAGLSLSHRSIPINSRLSSVRNY. The Mitochondrial matrix portion of the chain corresponds to 37–129; sequence ISIGCANKTG…PSGDNKVKIR (93 aa). The span at 64–77 shows a compositional bias: polar residues; it reads RFNSSSNGNGTDKN. Residues 64-102 form a disordered region; the sequence is RFNSSSNGNGTDKNASVAPKTEVKKIVPPKPSTNGKSKT. The helical transmembrane segment at 130–151 threads the bilayer; sequence VLIALALLIGAKLLNVQVPFFF. One can recognise an ABC transmembrane type-1 domain in the interval 130–421; it reads VLIALALLIG…LGSVYRELKQ (292 aa). Topologically, residues 152 to 175 are mitochondrial intermembrane; it reads KQTIDSMNIEWGPDVATVLPVAIT. Residues 176 to 199 form a helical membrane-spanning segment; that stretch reads MTILSYGAARFGAVMFGELRNAVF. At 200–248 the chain is on the mitochondrial matrix side; it reads AKVAQNAIRKVSLQTFQHLMKLDLGWHLSRQTGGLTRAMDRGTKGISYV. A helical membrane pass occupies residues 249-272; that stretch reads LSAMVFHMIPITFEISVVCGILTY. Q273 is a topological domain (mitochondrial intermembrane). Residues 274–294 traverse the membrane as a helical segment; the sequence is FGSSFAAMTFVTMLLYSFFTF. Over 295 to 360 the chain is Mitochondrial matrix; it reads KTTAWRTEFR…SQIKVAQSLA (66 aa). Glutathione-binding positions include 300–304 and 363–366; these read RTEFR and NAGQ. Residues 361–379 form a helical membrane-spanning segment; that stretch reads FLNAGQNFIFTSALTAMMY. The Mitochondrial intermembrane portion of the chain corresponds to 380-394; sequence MGASGVMEGALTVGD. A helical membrane pass occupies residues 395 to 416; the sequence is LVLINQLVFQLSVPLNFLGSVY. A glutathione-binding site is contributed by G413. At 417–720 the chain is on the mitochondrial matrix side; sequence RELKQSLIDM…EKEPRTSKKD (304 aa). Positions 456 to 692 constitute an ABC transporter domain; that stretch reads IKFENVTFGY…PNSLYSELWN (237 aa). ATP is bound by residues Y465 and 489–500; that span reads GPSGSGKSTILR.

This sequence belongs to the ABC transporter superfamily. ABCB family. Heavy Metal importer (TC 3.A.1.210) subfamily. In terms of assembly, homodimer.

It localises to the mitochondrion inner membrane. Functionally, performs an essential function in the generation of cytoplasmic iron-sulfur proteins by mediating the ATP-dependent export of Fe/S cluster precursors synthesized by NFS1 and other mitochondrial proteins. Hydrolyzes ATP. Binds glutathione and may function by transporting a glutathione-conjugated iron-sulfur compound. The chain is Iron-sulfur clusters transporter ATM1, mitochondrial from Kluyveromyces lactis (strain ATCC 8585 / CBS 2359 / DSM 70799 / NBRC 1267 / NRRL Y-1140 / WM37) (Yeast).